The chain runs to 1482 residues: Cystic fibrosis transmembrane conductance regulator (1482 aa).

Over 1–77 the chain is Cytoplasmic; it reads MQRSPLEKAS…KLINALQRCF (77 aa). A helical membrane pass occupies residues 78–98; it reads FWRFTFYGILLYLGEVTKAIQ. Residues 81-365 enclose the ABC transmembrane type-1 1 domain; the sequence is FTFYGILLYL…WAVQTWYDSL (285 aa). Residues 99–122 are Extracellular-facing; it reads PLLLGRIIASYDPDNKMERSIAIY. A helical membrane pass occupies residues 123-146; sequence LGIGLCLLFIMRTLLLHPAIFGLH. Over 147-195 the chain is Cytoplasmic; it reads HIGMQMRIALFSLIYKKTLKLSSRVLDKISIGQLVSLLSNNLNKFDEGL. The chain crosses the membrane as a helical span at residues 196–216; it reads ALAHFVWIAPLQVMLLMGLLW. The Extracellular segment spans residues 217–222; the sequence is ELLQAS. The chain crosses the membrane as a helical span at residues 223 to 243; it reads AFCGLAFLIVLALLQAGLGRM. Topologically, residues 244–298 are cytoplasmic; that stretch reads MMKYRDQRAGKINERLVITSEMIENIQSVKAYCWEEAMEKMIENLRQTELRLTRK. The chain crosses the membrane as a helical span at residues 299–319; that stretch reads AAYVRYVNSSAFFFSGFFVVF. Residues 320-339 are Extracellular-facing; sequence LSVLPYALIKGIILRKIFTT. Residues 340 to 358 form a helical membrane-spanning segment; the sequence is ISFCIVLRMAVTRQFPWAV. The Cytoplasmic portion of the chain corresponds to 359–859; it reads QTWYDSLGAI…YLRYITVHKN (501 aa). ATP contacts are provided by residues tryptophan 401, 458 to 465, and glutamine 493; that span reads GSTGAGKT. In terms of domain architecture, ABC transporter 1 spans 423–646; the sequence is SGDNRLFFSN…RPDFSSKLMG (224 aa). Cysteine 524 carries S-palmitoyl cysteine lipidation. Phosphoserine is present on residues serine 549 and serine 660. The disordered R region stretch occupies residues 654–832; sequence SAERRNSILT…EEINEEDLKE (179 aa). Residue serine 670 is modified to Phosphoserine; by PKA. At serine 686 the chain carries Phosphoserine. A Glycyl lysine isopeptide (Lys-Gly) (interchain with G-Cter in ubiquitin) cross-link involves residue lysine 688. 2 positions are modified to phosphoserine: serine 700 and serine 712. The residue at position 717 (threonine 717) is a Phosphothreonine. 5 positions are modified to phosphoserine: serine 737, serine 768, serine 791, serine 796, and serine 814. Residues 860–880 form a helical membrane-spanning segment; sequence LIFVLIWCLVIFLAEVAASLV. The region spanning 860-1156 is the ABC transmembrane type-1 2 domain; that stretch reads LIFVLIWCLV…AVNSSIDVDS (297 aa). The Extracellular portion of the chain corresponds to 881–919; the sequence is AFWLIEKTRPQDKGNSTRSTNNTSPVIITSTSAFYMFYI. Residues asparagine 895 and asparagine 901 are each glycosylated (N-linked (GlcNAc...) asparagine). The chain crosses the membrane as a discontinuously helical span at residues 920-940; that stretch reads YVGVADSLLALGFLRGLPLVH. At 941–991 the chain is on the cytoplasmic side; that stretch reads TLITVSKILHQKMLHSVLHAPMSTLNTLKAGAILNRFSKDIAILDDLLPLT. Residues 992–1012 traverse the membrane as a helical segment; sequence IFDFIQLVLIVIGAVVVVSIL. Residues 1013-1014 are Extracellular-facing; sequence KP. Residues 1015–1035 traverse the membrane as a helical segment; sequence YIFLAAVPVIIAFVILRAYFL. The Cytoplasmic segment spans residues 1036–1096; the sequence is QTSQQLKQLE…TATWFLYLST (61 aa). A helical membrane pass occupies residues 1097 to 1117; sequence LRWFQMRIEMIFVVFFVAVTF. Residues 1118–1131 are Extracellular-facing; sequence ISILTTGEGEGTVG. The helical transmembrane segment at 1132-1152 threads the bilayer; it reads IILTLAMNIMSTLQWAVNSSI. At 1153–1482 the chain is on the cytoplasmic side; that stretch reads DVDSLMRSVS…AEEEVQDTRL (330 aa). The 234-residue stretch at 1212-1445 folds into the ABC transporter 2 domain; it reads ITVKDLTAKY…KSLFQQAISP (234 aa). Residues tyrosine 1221 and 1246–1253 each bind ATP; that span reads GRTGSGKS. The segment at 1388 to 1482 is interaction with GORASP2; that stretch reads RALKQAFADC…AEEEVQDTRL (95 aa). Cysteine 1397 is lipidated: S-palmitoyl cysteine. Residues serine 1446 and serine 1458 each carry the phosphoserine modification. The segment at 1454 to 1482 is disordered; that stretch reads QRSSSKHRSRAQITALKEEAEEEVQDTRL. Residues 1472–1482 show a composition bias toward acidic residues; that stretch reads EAEEEVQDTRL. Residues 1480-1482 carry the PDZ-binding motif; the sequence is TRL.

The protein belongs to the ABC transporter superfamily. ABCC family. CFTR transporter (TC 3.A.1.202) subfamily. In terms of assembly, monomer; does not require oligomerization for channel activity. May form oligomers in the membrane. Interacts with SLC26A3, SLC26A6 and NHERF1. Interacts with SHANK2. Interacts with MYO6. Interacts (via C-terminus) with GOPC (via PDZ domain); this promotes CFTR internalization and thereby decreases channel activity. Interacts with SLC4A7 through NHERF1. Found in a complex with MYO5B and RAB11A. Interacts with ANO1. Interacts with SLC26A8. Interacts with AHCYL1; the interaction increases CFTR activity. Interacts with CSE1L. The core-glycosylated form interacts with GORASP2 (via PDZ GRASP-type 1 domain) in respone to ER stress. Interacts with MARCHF2; the interaction leads to CFTR ubiqtuitination and degradation. Interacts with ADGRG2. N-glycosylated. Post-translationally, phosphorylated; cAMP treatment promotes phosphorylation and activates the channel. Dephosphorylation decreases the ATPase activity (in vitro). Phosphorylation at PKA sites activates the channel. Phosphorylation at PKC sites enhances the response to phosphorylation by PKA. Phosphorylated by AMPK; this inhibits channel activity. In terms of processing, ubiquitinated, leading to its degradation in the lysosome. Deubiquitination by USP10 in early endosomes enhances its endocytic recycling to the cell membrane. Ubiquitinated by RNF185 during ER stress. Ubiquitinated by MARCHF2.

It localises to the apical cell membrane. It is found in the early endosome membrane. The protein resides in the cell membrane. The protein localises to the recycling endosome membrane. Its subcellular location is the endoplasmic reticulum membrane. It localises to the nucleus. The catalysed reaction is ATP + H2O + closed Cl(-) channel = ADP + phosphate + open Cl(-) channel.. It carries out the reaction chloride(in) = chloride(out). It catalyses the reaction hydrogencarbonate(in) = hydrogencarbonate(out). The enzyme catalyses ATP + H2O = ADP + phosphate + H(+). In terms of biological role, epithelial ion channel that plays an important role in the regulation of epithelial ion and water transport and fluid homeostasis. Mediates the transport of chloride ions across the cell membrane. Possesses an intrinsic ATPase activity and utilizes ATP to gate its channel; the passive flow of anions through the channel is gated by cycles of ATP binding and hydrolysis by the ATP-binding domains. The ion channel is also permeable to HCO(3)(-); selectivity depends on the extracellular chloride concentration. Exerts its function also by modulating the activity of other ion channels and transporters. Contributes to the regulation of the pH and the ion content of the epithelial fluid layer. Modulates the activity of the epithelial sodium channel (ENaC) complex, in part by regulating the cell surface expression of the ENaC complex. May regulate bicarbonate secretion and salvage in epithelial cells by regulating the transporter SLC4A7. Can inhibit the chloride channel activity of ANO1. Plays a role in the chloride and bicarbonate homeostasis during sperm epididymal maturation and capacitation. In Rhinolophus ferrumequinum (Greater horseshoe bat), this protein is Cystic fibrosis transmembrane conductance regulator.